Reading from the N-terminus, the 271-residue chain is MISSYKYNPKLYFLSTFVVTYILWFTGAYLSFSSTYSGIYMLIMLPGLMAPFIISTILIAKSKNNELKKDFINRLFNLKLINLKTIPVVFLLMPAVILLSILLSIPFGGSISQFQFSGGFSFSTDFVPVLFLLLLAATFEELGWRGYAFDSLQSRYSLFKASILFGIFWSLWHFPLIFVNNSYQYEIFNQSIWYGLNFFLSILPMGIIITWMCLKNRKSIILAIIFHFLINLNQELLAITQDTKIIETGVLFLVAAAIILYDKKMFFEKLG.

Residues 1–9 (MISSYKYNP) lie on the Extracellular side of the membrane. The helical transmembrane segment at 10-30 (KLYFLSTFVVTYILWFTGAYL) threads the bilayer. At 31 to 38 (SFSSTYSG) the chain is on the cytoplasmic side. A helical transmembrane segment spans residues 39-59 (IYMLIMLPGLMAPFIISTILI). Topologically, residues 60–82 (AKSKNNELKKDFINRLFNLKLIN) are extracellular. Residues 83–105 (LKTIPVVFLLMPAVILLSILLSI) traverse the membrane as a helical segment. The Cytoplasmic segment spans residues 106–125 (PFGGSISQFQFSGGFSFSTD). The helical transmembrane segment at 126-149 (FVPVLFLLLLAATFEELGWRGYAF) threads the bilayer. The Proton donor/acceptor role is filled by E140. The Extracellular segment spans residues 150-159 (DSLQSRYSLF). The helical transmembrane segment at 160-179 (KASILFGIFWSLWHFPLIFV) threads the bilayer. H173 serves as the catalytic Proton donor/acceptor. Residues 180-192 (NNSYQYEIFNQSI) lie on the Cytoplasmic side of the membrane. Residues 193–213 (WYGLNFFLSILPMGIIITWMC) form a helical membrane-spanning segment. Residues 214–219 (LKNRKS) are Extracellular-facing. A helical transmembrane segment spans residues 220–237 (IILAIIFHFLINLNQELL). Residues 238-243 (AITQDT) lie on the Cytoplasmic side of the membrane. The helical transmembrane segment at 244–263 (KIIETGVLFLVAAAIILYDK) threads the bilayer. The Extracellular portion of the chain corresponds to 264-271 (KMFFEKLG).

This sequence belongs to the peptidase U48 family.

Its subcellular location is the cell membrane. The catalysed reaction is Hydrolyzes the peptide bond -P2-(S-farnesyl or geranylgeranyl)C-P1'-P2'-P3'-COOH where P1' and P2' are amino acids with aliphatic sidechains and P3' is any C-terminal residue.. Activity is unaffected by metalloprotease inhibitors 5 mM EDTA and 5 mM Zn(2+). Activity partially inhibited by 1,10-phenanthroline and 1,7-phenanthroline. Functionally, protease involved in the processing of a variety of prenylated proteins containing the C-terminal CAAX motif, where C is a cysteine modified with an isoprenoid lipid, A is an aliphatic amino acid and X is any C-terminal amino acid. Proteolytically removes the C-terminal three residues of farnesylated proteins, leaving the prenylated cysteine as the new C-terminus. Hydrolysis depends on a farnesylated cysteine residue and no activity is shown towards geranylgeranylated peptides. This is CAAX prenyl protease 2 from Methanococcus maripaludis (strain DSM 14266 / JCM 13030 / NBRC 101832 / S2 / LL).